Consider the following 208-residue polypeptide: Imidazole glycerol phosphate synthase subunit HisH (208 aa).

Residues 1–206 form the Glutamine amidotransferase type-1 domain; it reads MIVIIDYDTG…KEVTYSCKSS (206 aa). The active-site Nucleophile is Cys79. Residues His181 and Glu183 contribute to the active site.

In terms of assembly, heterodimer of HisH and HisF.

Its subcellular location is the cytoplasm. The enzyme catalyses 5-[(5-phospho-1-deoxy-D-ribulos-1-ylimino)methylamino]-1-(5-phospho-beta-D-ribosyl)imidazole-4-carboxamide + L-glutamine = D-erythro-1-(imidazol-4-yl)glycerol 3-phosphate + 5-amino-1-(5-phospho-beta-D-ribosyl)imidazole-4-carboxamide + L-glutamate + H(+). The catalysed reaction is L-glutamine + H2O = L-glutamate + NH4(+). The protein operates within amino-acid biosynthesis; L-histidine biosynthesis; L-histidine from 5-phospho-alpha-D-ribose 1-diphosphate: step 5/9. Functionally, IGPS catalyzes the conversion of PRFAR and glutamine to IGP, AICAR and glutamate. The HisH subunit catalyzes the hydrolysis of glutamine to glutamate and ammonia as part of the synthesis of IGP and AICAR. The resulting ammonia molecule is channeled to the active site of HisF. This chain is Imidazole glycerol phosphate synthase subunit HisH, found in Listeria monocytogenes serovar 1/2a (strain ATCC BAA-679 / EGD-e).